The sequence spans 300 residues: Acetaldehyde dehydrogenase (300 aa).

NAD(+) is bound at residue 10–13 (SGNI). Cys-129 acts as the Acyl-thioester intermediate in catalysis. Residues 160–168 (SAGPGTRKN) and Asn-271 each bind NAD(+).

It belongs to the acetaldehyde dehydrogenase family.

The enzyme catalyses acetaldehyde + NAD(+) + CoA = acetyl-CoA + NADH + H(+). The chain is Acetaldehyde dehydrogenase from Alkalilimnicola ehrlichii (strain ATCC BAA-1101 / DSM 17681 / MLHE-1).